A 386-amino-acid polypeptide reads, in one-letter code: Meiotic chromosome segregation protein C1539.02 (386 aa).

Disordered stretches follow at residues 1 to 28 (MNQD…SNKS), 46 to 85 (RALI…SSKQ), and 366 to 386 (DIHE…KTKG). The segment covering 15–28 (AETSQLKNFSSNKS) has biased composition (polar residues).

The protein localises to the nucleus. Required for meiotic chromosome segregation. The chain is Meiotic chromosome segregation protein C1539.02 from Schizosaccharomyces pombe (strain 972 / ATCC 24843) (Fission yeast).